Consider the following 382-residue polypeptide: Sphingoid long-chain base transporter RSB1 (382 aa).

Residues 1 to 34 (MSNATNNTLGSLLPQLEAAANSNSLYGGMVPNLR) lie on the Extracellular side of the membrane. N-linked (GlcNAc...) asparagine glycosylation is found at asparagine 3 and asparagine 6. The chain crosses the membrane as a helical span at residues 35 to 55 (FNITMIVIWGILLTIHVVQLL). Topologically, residues 56–57 (MR) are cytoplasmic. Residues 58–78 (QYWFSIAFICTGILEVLGFIG) traverse the membrane as a helical segment. The Extracellular segment spans residues 79-90 (RTWSHSNVADMD). A helical membrane pass occupies residues 91-111 (AFLLNMICLTIAPVFTMGGIY). Topologically, residues 112-135 (YQLAKLIEVYGHRFSLLPSPMAYS) are cytoplasmic. Residues 136-156 (FIFICSDIVSLVVQAVGGGLC) form a helical membrane-spanning segment. Topologically, residues 157–171 (GVAVTDGTSTTTGNH) are extracellular. A helical membrane pass occupies residues 172–192 (VFIAGLAIQVASMAIFLMLWF). Residues 193–241 (HFLFRIYISVRWEHINSRPISLSLLKISQTEVDYLYREKFHFLRLEPKR) are Cytoplasmic-facing. A helical transmembrane segment spans residues 242 to 262 (WVFHYFNLAMTVAVLTIFTRC). Residues 263–281 (CYRLAELVVGWDGYLITHE) are Extracellular-facing. A helical membrane pass occupies residues 282–302 (WYFIILDALMMAIATVTLTIF). Over 303 to 382 (HPGFAFKGRS…LFSSKKKAKL (80 aa)) the chain is Cytoplasmic.

This sequence belongs to the lipid-translocating exporter (LTE) (TC 9.A.26.1) family.

It is found in the cell membrane. Catalyzes the ATP-dependent translocation of sphingoid long-chain bases (LCBs) from the cytoplasmic site toward the extracytoplasmic side of the membrane (flip-flop). Involved in the establishment of the functional lipid asymmetry of the plasma membrane. Regulates intracellular levels of LCBs, sphingolipid precursors that are growth inhibitory at increased levels. The chain is Sphingoid long-chain base transporter RSB1 (RSB1) from Saccharomyces cerevisiae (strain RM11-1a) (Baker's yeast).